Reading from the N-terminus, the 379-residue chain is Carbamoyl phosphate synthase small chain (379 aa).

The segment at 1-183 (MTSQDRSEAV…EAYVVEPDGE (183 aa)) is CPSase. Positions 51, 235, and 237 each coordinate L-glutamine. Residues 185-379 (LYTVVAYDMG…FVELIQANKK (195 aa)) form the Glutamine amidotransferase type-1 domain. C263 functions as the Nucleophile in the catalytic mechanism. The L-glutamine site is built by F264, Q267, N305, G307, and F308. Active-site residues include H353 and E355.

Belongs to the CarA family. As to quaternary structure, composed of two chains; the small (or glutamine) chain promotes the hydrolysis of glutamine to ammonia, which is used by the large (or ammonia) chain to synthesize carbamoyl phosphate. Tetramer of heterodimers (alpha,beta)4.

It carries out the reaction hydrogencarbonate + L-glutamine + 2 ATP + H2O = carbamoyl phosphate + L-glutamate + 2 ADP + phosphate + 2 H(+). The catalysed reaction is L-glutamine + H2O = L-glutamate + NH4(+). It functions in the pathway amino-acid biosynthesis; L-arginine biosynthesis; carbamoyl phosphate from bicarbonate: step 1/1. Its pathway is pyrimidine metabolism; UMP biosynthesis via de novo pathway; (S)-dihydroorotate from bicarbonate: step 1/3. Functionally, small subunit of the glutamine-dependent carbamoyl phosphate synthetase (CPSase). CPSase catalyzes the formation of carbamoyl phosphate from the ammonia moiety of glutamine, carbonate, and phosphate donated by ATP, constituting the first step of 2 biosynthetic pathways, one leading to arginine and/or urea and the other to pyrimidine nucleotides. The small subunit (glutamine amidotransferase) binds and cleaves glutamine to supply the large subunit with the substrate ammonia. The sequence is that of Carbamoyl phosphate synthase small chain from Corynebacterium diphtheriae (strain ATCC 700971 / NCTC 13129 / Biotype gravis).